Here is a 183-residue protein sequence, read N- to C-terminus: Microfibrillar-associated protein 2 (183 aa).

The segment at residues 1–17 (MRAAYLFLLFLPAGLLA) is a signal peptide (or 19). Gln18 carries the post-translational modification Pyrrolidone carboxylic acid. Sulfotyrosine is present on residues Tyr47, Tyr48, and Tyr50. The tract at residues 58–94 (SEEQFQFQSQQQVQQEVIPAPTPEPGNAELEPTEPGP) is disordered. Low complexity predominate over residues 60-74 (EQFQFQSQQQVQQEV). The region spanning 153–183 (CRDKFSKCGVMASSGLCQSVAASCARSCGSC) is the ShKT domain. Intrachain disulfides connect Cys153/Cys183, Cys160/Cys176, and Cys169/Cys180.

This sequence belongs to the MFAP family. As to quaternary structure, forms a ternary complex with BGN and ELN. Interacts with FBN1 (via N-terminal domain) and FBN2. Post-translationally, forms intermolecular disulfide bonds either with other MAGP-1 molecules or with other components of the microfibrils. May form transglutaminase cross-links. In terms of processing, O-glycosylated.

It is found in the secreted. The protein resides in the extracellular space. Its subcellular location is the extracellular matrix. Its function is as follows. Component of the elastin-associated microfibrils. This Homo sapiens (Human) protein is Microfibrillar-associated protein 2 (MFAP2).